Consider the following 172-residue polypeptide: Translationally-controlled tumor protein (172 aa).

Residues 1-172 (MIIYRDLISH…FKDGLEMEKC (172 aa)) form the TCTP domain. Residue serine 46 is modified to Phosphoserine; by PLK1. A Phosphoserine modification is found at serine 53. Serine 64 carries the phosphoserine; by PLK1 modification. A required for reduction of TSC22D1 protein stability region spans residues 70–172 (VDIVMNHHLQ…FKDGLEMEKC (103 aa)).

The protein belongs to the TCTP family. Homodimer. Interacts with STEAP3. Interacts with TSC22D1; interaction results in the destabilization of TSC22D1 protein. As to expression, found in several healthy and tumoral cells including erythrocytes, hepatocytes, macrophages, platelets, keratinocytes, erythroleukemia cells, gliomas, melanomas, hepatoblastomas, and lymphomas. It cannot be detected in kidney and renal cell carcinoma (RCC). Expressed in placenta and prostate.

It localises to the cytoplasm. Its function is as follows. Involved in calcium binding and microtubule stabilization. Acts as a negative regulator of TSC22D1-mediated apoptosis, via interaction with and destabilization of TSC22D1 protein. The polypeptide is Translationally-controlled tumor protein (TPT1) (Homo sapiens (Human)).